The following is a 390-amino-acid chain: MMIFSTAVLRLCATSRIGAVTKRASSTFLSSASSSSSSSSPTQSMPPQRYTHHQFQRHSYSTTTTTLQQQQQPSPPLSTAQLVKQLRLLTGAPMLECKKALASPDVNNDLALAQEWLRKHSSQKIGSKVAGREALEGLVGVCIDNCDGGSRGVLVKVASETDFASRSEVFTGLVQEIADAAAAAAGDGGDIVDIPTFLSNTQSITTGKLLSECLNDAVLSIRENIQLDSIVTIGTTPSSRSVIAGYVHGRAPNSTCGTSAALVEVEVLPKDGGGGDDAVLSEEEKSVAMEAAKKLAMHVVASNPLYLNPESVPVDVVEKEREILMEKMTDSNKPPEIIEKIISGQLRKFYEGICLTEQSHLVEEGNPKISKVMKGLGLVVKDFRLVGMSK.

Residues 1–24 (MMIFSTAVLRLCATSRIGAVTKRA) constitute a mitochondrion transit peptide. Residues 30-40 (SSASSSSSSSS) are compositionally biased toward low complexity. The tract at residues 30 to 54 (SSASSSSSSSSPTQSMPPQRYTHHQ) is disordered.

It belongs to the EF-Ts family.

The protein localises to the mitochondrion. In terms of biological role, associates with the EF-Tu.GDP complex and induces the exchange of GDP to GTP. It remains bound to the aminoacyl-tRNA.EF-Tu.GTP complex up to the GTP hydrolysis stage on the ribosome. In Thalassiosira pseudonana (Marine diatom), this protein is Elongation factor Ts 2, mitochondrial.